A 142-amino-acid polypeptide reads, in one-letter code: Putative pre-16S rRNA nuclease (142 aa).

This sequence belongs to the YqgF nuclease family.

Its subcellular location is the cytoplasm. Could be a nuclease involved in processing of the 5'-end of pre-16S rRNA. The sequence is that of Putative pre-16S rRNA nuclease from Lactobacillus helveticus (strain DPC 4571).